The primary structure comprises 394 residues: Obg-like ATPase 1 (394 aa).

Residues 21–285 enclose the OBG-type G domain; that stretch reads LKAGIVGLAN…MSPEDAEEEL (265 aa). 30–35 is an ATP binding site; sequence NVGKST. 2 residues coordinate Mg(2+): Ser34 and Thr55. Thr89 carries the phosphothreonine modification. Residue Lys98 forms a Glycyl lysine isopeptide (Lys-Gly) (interchain with G-Cter in ubiquitin) linkage. 2 positions are modified to phosphoserine: Ser116 and Ser119. Position 233 (Leu233) interacts with ATP. The region spanning 306–389 is the TGS domain; the sequence is DLISFFTCGP…EDGDIIYFRA (84 aa).

Belongs to the TRAFAC class OBG-HflX-like GTPase superfamily. OBG GTPase family. YchF/OLA1 subfamily. As to quaternary structure, monomer. Interacts with the 26S proteasome subunit RPT6. Mg(2+) is required as a cofactor.

The protein resides in the cytoplasm. Functionally, hydrolyzes ATP, and can also hydrolyze GTP with lower efficiency. Has lower affinity for GTP. The protein is Obg-like ATPase 1 of Saccharomyces cerevisiae (strain ATCC 204508 / S288c) (Baker's yeast).